Consider the following 168-residue polypeptide: Small ribosomal subunit protein uS8 (168 aa).

The tract at residues 59-93 is not found in other S8 sequences; that stretch reads EEYKKMKELAEKSPNPKMKRYLKQLEEYNKGTQYP.

The protein belongs to the universal ribosomal protein uS8 family. In terms of assembly, part of the 30S ribosomal subunit. Contacts proteins S5 and S12.

In terms of biological role, one of the primary rRNA binding proteins, it binds directly to 16S rRNA central domain where it helps coordinate assembly of the platform of the 30S subunit. The sequence is that of Small ribosomal subunit protein uS8 from Aquifex aeolicus (strain VF5).